A 63-amino-acid polypeptide reads, in one-letter code: Prokaryotic ubiquitin-like protein Pup (63 aa).

Residues 1–35 (MSGQQSQINAGGGNGQGGDTPEFDAGQVSINSAGT) are disordered. Residues 19-57 (DTPEFDAGQVSINSAGTDDLLDEIDGLLESNAEEFVRSY) form an ARC ATPase binding region. An Isoglutamyl lysine isopeptide (Glu-Lys) (interchain with K-? in acceptor proteins) cross-link involves residue glutamate 63.

Belongs to the prokaryotic ubiquitin-like protein family. In terms of assembly, strongly interacts with the proteasome-associated ATPase ARC through a hydrophobic interface; the interacting region of Pup lies in its C-terminal half. There is one Pup binding site per ARC hexamer ring.

Its pathway is protein degradation; proteasomal Pup-dependent pathway. In terms of biological role, protein modifier that is covalently attached to lysine residues of substrate proteins, thereby targeting them for proteasomal degradation. The tagging system is termed pupylation. The chain is Prokaryotic ubiquitin-like protein Pup from Corynebacterium aurimucosum (strain ATCC 700975 / DSM 44827 / CIP 107346 / CN-1) (Corynebacterium nigricans).